A 676-amino-acid chain; its full sequence is Long-chain-fatty-acid--CoA ligase 1 (676 aa).

246–257 contacts ATP; that stretch reads YTSGSTGLPKGV. An FACS motif is present at residues 511–560; sequence DGWFRTGDVGELTPEGLLRIIDRKKNLVKTQNGEYIALEKLESRYRTSSL.

It belongs to the ATP-dependent AMP-binding enzyme family. It depends on Mg(2+) as a cofactor.

The catalysed reaction is a long-chain fatty acid + ATP + CoA = a long-chain fatty acyl-CoA + AMP + diphosphate. Esterification, concomitant with transport, of exogenous long-chain fatty acids into metabolically active CoA thioesters for subsequent degradation or incorporation into phospholipids. It may supplement intracellular myristoyl-CoA pools from exogenous myristate. Preferentially acts on C12:0-C16:0 fatty acids with myristic and pentadecanic acid (C15:0) having the highest activities. Appears to play a role in the maintenance of cell viability during stationary phase. This chain is Long-chain-fatty-acid--CoA ligase 1 (lcf1), found in Schizosaccharomyces pombe (strain 972 / ATCC 24843) (Fission yeast).